Reading from the N-terminus, the 365-residue chain is Geranylgeranyl pyrophosphate synthase (365 aa).

Polar residues predominate over residues 1 to 11 (MKPLPSTNGKV). The disordered stretch occupies residues 1–36 (MKPLPSTNGKVNGNGKHHDSSLSSTSSTSSSSSSDT). Over residues 21 to 34 (SLSSTSSTSSSSSS) the composition is skewed to low complexity. Lys-78, Arg-81, and His-110 together coordinate isopentenyl diphosphate. Residues Asp-117 and Asp-121 each contribute to the Mg(2+) site. Arg-126 contributes to the dimethylallyl diphosphate binding site. Arg-127 contacts isopentenyl diphosphate. 3 residues coordinate dimethylallyl diphosphate: Lys-211, Thr-212, and Gln-247. Asp-250 is a binding site for Mg(2+). Dimethylallyl diphosphate-binding residues include Asn-254, Lys-263, and Lys-273.

It belongs to the FPP/GGPP synthase family. Requires Mg(2+) as cofactor.

The catalysed reaction is isopentenyl diphosphate + dimethylallyl diphosphate = (2E)-geranyl diphosphate + diphosphate. It carries out the reaction isopentenyl diphosphate + (2E)-geranyl diphosphate = (2E,6E)-farnesyl diphosphate + diphosphate. The enzyme catalyses isopentenyl diphosphate + (2E,6E)-farnesyl diphosphate = (2E,6E,10E)-geranylgeranyl diphosphate + diphosphate. Geranylgeranyl pyrophosphate synthase that catalyzes the trans-addition of the three molecules of IPP onto DMAPP to form geranylgeranyl pyrophosphate. Does not show any monoterpene nor sesquiterpene synthase activity. The sequence is that of Geranylgeranyl pyrophosphate synthase from Melampsora lini (Rust fungus).